A 64-amino-acid polypeptide reads, in one-letter code: MPKMKSKSALKKRIKITGTGKIKRHQAFRSHLAQNKTTKQKRQSRNAELMHKSDYKRFKALIQK.

This sequence belongs to the bacterial ribosomal protein bL35 family.

In Mycoplasmopsis pulmonis (strain UAB CTIP) (Mycoplasma pulmonis), this protein is Large ribosomal subunit protein bL35.